Here is a 90-residue protein sequence, read N- to C-terminus: Barrier-to-autointegration factor (90 aa).

It belongs to the BAF family. In terms of assembly, may interact with MAD1.

Its subcellular location is the nucleus. The protein localises to the cytoplasm. The protein resides in the chromosome. Functionally, plays fundamental roles in nuclear assembly, chromatin organization, gene expression and gonad development. May potently compress chromatin structure and be involved in membrane recruitment and chromatin decondensation during nuclear assembly. Functions are required in both M phase and interphase of the cell cycle. In Drosophila melanogaster (Fruit fly), this protein is Barrier-to-autointegration factor (baf).